The following is a 307-amino-acid chain: Ornithine carbamoyltransferase (307 aa).

Residues 56-59 (STRT), Gln-83, Arg-107, and 134-137 (HPCQ) each bind carbamoyl phosphate. L-ornithine is bound by residues Asn-165, Asp-223, and 227–228 (SM). Residues 263–264 (CL) and Arg-291 contribute to the carbamoyl phosphate site.

Belongs to the aspartate/ornithine carbamoyltransferase superfamily. OTCase family.

It is found in the cytoplasm. The enzyme catalyses carbamoyl phosphate + L-ornithine = L-citrulline + phosphate + H(+). It participates in amino-acid biosynthesis; L-arginine biosynthesis; L-arginine from L-ornithine and carbamoyl phosphate: step 1/3. In terms of biological role, reversibly catalyzes the transfer of the carbamoyl group from carbamoyl phosphate (CP) to the N(epsilon) atom of ornithine (ORN) to produce L-citrulline. This Cupriavidus pinatubonensis (strain JMP 134 / LMG 1197) (Cupriavidus necator (strain JMP 134)) protein is Ornithine carbamoyltransferase.